Consider the following 332-residue polypeptide: Tryptophan--tRNA ligase (332 aa).

ATP is bound by residues lysine 13–serine 15 and glycine 21–asparagine 22. Positions proline 14–asparagine 22 match the 'HIGH' region motif. Aspartate 137 serves as a coordination point for L-tryptophan. ATP-binding positions include glycine 149 to aspartate 151, isoleucine 188, and lysine 197 to serine 201. The short motif at lysine 197 to serine 201 is the 'KMSKS' region element.

It belongs to the class-I aminoacyl-tRNA synthetase family. As to quaternary structure, homodimer.

It localises to the cytoplasm. It catalyses the reaction tRNA(Trp) + L-tryptophan + ATP = L-tryptophyl-tRNA(Trp) + AMP + diphosphate + H(+). In terms of biological role, catalyzes the attachment of tryptophan to tRNA(Trp). The protein is Tryptophan--tRNA ligase of Clostridium perfringens (strain 13 / Type A).